Reading from the N-terminus, the 688-residue chain is Elongation factor G (688 aa).

The tr-type G domain occupies Glu-8–Met-282. Residues Ala-17–Thr-24, Asp-81–His-85, and Asn-135–Asp-138 each bind GTP.

Belongs to the TRAFAC class translation factor GTPase superfamily. Classic translation factor GTPase family. EF-G/EF-2 subfamily.

It localises to the cytoplasm. Catalyzes the GTP-dependent ribosomal translocation step during translation elongation. During this step, the ribosome changes from the pre-translocational (PRE) to the post-translocational (POST) state as the newly formed A-site-bound peptidyl-tRNA and P-site-bound deacylated tRNA move to the P and E sites, respectively. Catalyzes the coordinated movement of the two tRNA molecules, the mRNA and conformational changes in the ribosome. The polypeptide is Elongation factor G (Phytoplasma mali (strain AT)).